The following is a 181-amino-acid chain: Transmembrane protein 154 (181 aa).

The first 22 residues, 1-22 (MTVPCAALVLALGLAFGQSSQG), serve as a signal peptide directing secretion. The disordered stretch occupies residues 19-47 (SSQGNDEESEYSGQSITEEENSEDETTRS). The Extracellular portion of the chain corresponds to 23–74 (NDEESEYSGQSITEEENSEDETTRSALATVTTEALAENVNSTHTNDTSNQVE). Residues 75–95 (FILMVAIPLAALLILLFMVLI) traverse the membrane as a helical segment. Over 96–181 (ATYFKSKRPK…PNPSPSDNES (86 aa)) the chain is Cytoplasmic. The tract at residues 103 to 122 (RPKQEPSSQGSQSALQTHEL) is disordered. Over residues 107-118 (EPSSQGSQSALQ) the composition is skewed to polar residues. Phosphotyrosine is present on tyrosine 160. Residues 161-181 (ECLPTLKEEKEPNPSPSDNES) form a disordered region. Serine 177 is modified (phosphoserine).

The protein localises to the membrane. This is Transmembrane protein 154 (Tmem154) from Mus musculus (Mouse).